Reading from the N-terminus, the 806-residue chain is Glycerol-3-phosphate acyltransferase (806 aa).

The HXXXXD motif motif lies at 305 to 310 (CHRSHM).

It belongs to the GPAT/DAPAT family.

The protein localises to the cell inner membrane. The catalysed reaction is sn-glycerol 3-phosphate + an acyl-CoA = a 1-acyl-sn-glycero-3-phosphate + CoA. It functions in the pathway phospholipid metabolism; CDP-diacylglycerol biosynthesis; CDP-diacylglycerol from sn-glycerol 3-phosphate: step 1/3. The sequence is that of Glycerol-3-phosphate acyltransferase from Salmonella paratyphi A (strain ATCC 9150 / SARB42).